Here is a 311-residue protein sequence, read N- to C-terminus: ATP synthase subunit gamma, mitochondrial (311 aa).

The N-terminal 33 residues, 1-33 (MLSRIVSNNATRSVMCHQAQVGILYKTNPVRTY), are a transit peptide targeting the mitochondrion.

The protein belongs to the ATPase gamma chain family. As to quaternary structure, F-type ATPases have 2 components, CF(1) - the catalytic core - and CF(0) - the membrane proton channel. CF(1) has five subunits: alpha(3), beta(3), gamma(1), delta(1), epsilon(1). CF(0) has three main subunits: a, b and c.

It is found in the mitochondrion. Its subcellular location is the mitochondrion inner membrane. Its function is as follows. Mitochondrial membrane ATP synthase (F(1)F(0) ATP synthase or Complex V) produces ATP from ADP in the presence of a proton gradient across the membrane which is generated by electron transport complexes of the respiratory chain. F-type ATPases consist of two structural domains, F(1) - containing the extramembraneous catalytic core, and F(0) - containing the membrane proton channel, linked together by a central stalk and a peripheral stalk. During catalysis, ATP synthesis in the catalytic domain of F(1) is coupled via a rotary mechanism of the central stalk subunits to proton translocation. Part of the complex F(1) domain and the central stalk which is part of the complex rotary element. The gamma subunit protrudes into the catalytic domain formed of alpha(3)beta(3). Rotation of the central stalk against the surrounding alpha(3)beta(3) subunits leads to hydrolysis of ATP in three separate catalytic sites on the beta subunits. The polypeptide is ATP synthase subunit gamma, mitochondrial (ATP3) (Saccharomyces cerevisiae (strain ATCC 204508 / S288c) (Baker's yeast)).